Consider the following 446-residue polypeptide: MAHVITRINAREILDSRGNPTVEVDLETNLGIFRAAVPSGASTGIYEALELRDNDKSRYLGKGVQKAIKNINEIIAPKLIGMNCTEQKKIDNLMVEELDGSKNEWGWSKSKLGANAILAISMAVCRAGAAPNKVSLYKYLAQLAGKKSDQMVLPVPCLNVINGGSHAGNKLSFQEFMIVPVGAPSFKEALRYGAEVYHTLKSEIKKKYGIDATNVGDEGGFAPNILNANEALDLLVTAIKSAGYEGKVKIAMDVAASEFYNSENKTYDLDFKTPNNDKSLVKTGAQLVDLYIDLVKKYPIVSIEDPFDQDDWENYAKLTAAIGKDVQIVGDDLLVTNPTRITKALEKNACNALLLKVNQIGSITEAIEACLLSQKNNWGVMVSHRSGETEDVFIADLVVALRTGQIKTGAPCRSERNAKYNQLLRIEESLGNNAVFAGEKFRLQLN.

A Mg(2+)-binding site is contributed by serine 42. Serine 42 bears the Phosphoserine mark. The short motif at 104 to 108 is the Pentapeptide insert element; that stretch reads EWGWS. At lysine 133 the chain carries N6-acetyllysine. A Glycyl lysine isopeptide (Lys-Gly) (interchain with G-Cter in ubiquitin) cross-link involves residue lysine 138. Tyrosine 139 carries the phosphotyrosine modification. The substrate site is built by histidine 166 and glutamate 175. Glutamate 218 functions as the Proton donor in the catalytic mechanism. Aspartate 253 is a binding site for Mg(2+). The short motif at 277 to 282 is the DKSLVK motif element; the sequence is DKSLVK. Glutamate 304 and aspartate 331 together coordinate Mg(2+). Substrate-binding residues include glutamate 304 and aspartate 331. Phosphothreonine is present on threonine 339. The Proton acceptor role is filled by lysine 356. An N6-acetyllysine modification is found at lysine 375. Residues 383 to 386 and lysine 407 contribute to the substrate site; that span reads SHRS.

The protein belongs to the enolase family. Homodimer. Forms a complex at least composed of DegP, ENO and HSP70. Interacts with G-actin. Interacts (via the DKSLVK motif) with mammalian host PLG/plasminogen (present in the mosquito blood meal); the interaction occurs at the ookinete cell surface and is required for ookinete invasion of the mosquito midgut. Interacts with A.gambiae EBP; depending on the Plasmodium species, the interaction is either involved in ookinete invasion of the mosquito midgut (P.berghei) or is dispensable (P.falciparum). It depends on Mg(2+) as a cofactor.

It is found in the cytoplasm. It localises to the nucleus. Its subcellular location is the cytoskeleton. The protein resides in the cell surface. The protein localises to the cell membrane. It is found in the vacuole. The catalysed reaction is (2R)-2-phosphoglycerate = phosphoenolpyruvate + H2O. It functions in the pathway carbohydrate degradation; glycolysis; pyruvate from D-glyceraldehyde 3-phosphate: step 4/5. Functionally, glycolytic enzyme that catalyzes the conversion of 2-phosphoglycerate to phosphoenolpyruvate. In addition to glycolysis, involved in various processes such as parasite development and invasion. Plays an essential role during ookinete invasion of the mosquito vector midgut by mediating the interaction of the ookinete with the midgut epithelium and, further, by binding to mammalian host plasminogen in the blood meal, whose conversion to active plasmin promotes the invasion process. The sequence is that of Enolase from Plasmodium falciparum.